Consider the following 671-residue polypeptide: Phenol 2-monooxygenase (671 aa).

FAD-binding positions include 10–43 (DVLI…RIFD) and 295–305 (LQEGRVFLAGD).

This sequence belongs to the PheA/TfdB FAD monooxygenase family. FAD serves as cofactor.

The protein resides in the cytoplasm. It carries out the reaction phenol + NADPH + O2 + H(+) = catechol + NADP(+) + H2O. It participates in aromatic compound metabolism; phenol degradation. Hydroxylates phenol to catechol. Also acts on cresols. In Ralstonia pickettii (Burkholderia pickettii), this protein is Phenol 2-monooxygenase (tbuD).